Reading from the N-terminus, the 962-residue chain is Glycine dehydrogenase (decarboxylating) (962 aa).

Lys710 carries the N6-(pyridoxal phosphate)lysine modification.

It belongs to the GcvP family. In terms of assembly, the glycine cleavage system is composed of four proteins: P, T, L and H. It depends on pyridoxal 5'-phosphate as a cofactor.

It carries out the reaction N(6)-[(R)-lipoyl]-L-lysyl-[glycine-cleavage complex H protein] + glycine + H(+) = N(6)-[(R)-S(8)-aminomethyldihydrolipoyl]-L-lysyl-[glycine-cleavage complex H protein] + CO2. The glycine cleavage system catalyzes the degradation of glycine. The P protein binds the alpha-amino group of glycine through its pyridoxal phosphate cofactor; CO(2) is released and the remaining methylamine moiety is then transferred to the lipoamide cofactor of the H protein. The protein is Glycine dehydrogenase (decarboxylating) of Idiomarina loihiensis (strain ATCC BAA-735 / DSM 15497 / L2-TR).